The primary structure comprises 639 residues: 3-hydroxybenzoate 4-monooxygenase (639 aa).

Residues 34 to 64, Q73, V166, N212, 269 to 271, Y317, D349, and S365 contribute to the FAD site; these read DVLIVGCGPAGLTLAAQLAAFPDIRTCIVEQ and RFY.

It belongs to the PheA/TfdB FAD monooxygenase family. As to quaternary structure, homodimer. The cofactor is FAD.

The enzyme catalyses 3-hydroxybenzoate + NADPH + O2 + H(+) = 3,4-dihydroxybenzoate + NADP(+) + H2O. Converts 3-hydroxybenzoate (m-hydroxybenzoate), and to a lesser extent p-hydroxybenzoate, to 3,4-dihydroxybenzoate (protocatechuate). Also acts on a number of analogs of 3-hydroxybenzoate substituted in the 2, 4, 5 and 6 positions. This chain is 3-hydroxybenzoate 4-monooxygenase (mobA), found in Comamonas testosteroni (Pseudomonas testosteroni).